A 407-amino-acid chain; its full sequence is Cysteine desulfurase (407 aa).

The residue at position 226 (K226) is an N6-(pyridoxal phosphate)lysine. Catalysis depends on C364, which acts as the Cysteine persulfide intermediate.

This sequence belongs to the class-V pyridoxal-phosphate-dependent aminotransferase family. Csd subfamily. In terms of assembly, homodimer. Interacts with SufE and the SufBCD complex composed of SufB, SufC and SufD. The interaction with SufE is required to mediate the direct transfer of the sulfur atom from the S-sulfanylcysteine. It depends on pyridoxal 5'-phosphate as a cofactor.

The protein localises to the cytoplasm. The enzyme catalyses (sulfur carrier)-H + L-cysteine = (sulfur carrier)-SH + L-alanine. It catalyses the reaction L-selenocysteine + AH2 = hydrogenselenide + L-alanine + A + H(+). The protein operates within cofactor biosynthesis; iron-sulfur cluster biosynthesis. Its function is as follows. Cysteine desulfurases mobilize the sulfur from L-cysteine to yield L-alanine, an essential step in sulfur metabolism for biosynthesis of a variety of sulfur-containing biomolecules. Component of the suf operon, which is activated and required under specific conditions such as oxidative stress and iron limitation. Acts as a potent selenocysteine lyase in vitro, that mobilizes selenium from L-selenocysteine. Selenocysteine lyase activity is however unsure in vivo. The protein is Cysteine desulfurase of Pectobacterium atrosepticum (strain SCRI 1043 / ATCC BAA-672) (Erwinia carotovora subsp. atroseptica).